The chain runs to 186 residues: High mobility group protein B4 (186 aa).

2 consecutive DNA-binding regions (HMG box) follow at residues 9 to 79 (PKAN…MNYV) and 93 to 161 (PRRP…ELYR). The disordered stretch occupies residues 77–98 (NYVGKRKKRRKRDPQEPRRPPS).

The protein belongs to the HMGB family.

The protein resides in the nucleus. It is found in the chromosome. The protein is High mobility group protein B4 (HMGB4) of Homo sapiens (Human).